A 749-amino-acid chain; its full sequence is Catalase-peroxidase 2 (749 aa).

An N-terminal signal peptide occupies residues Met-1–Ala-27. Residues Trp-107–Tyr-229 constitute a cross-link (tryptophyl-tyrosyl-methioninium (Trp-Tyr) (with M-255)). His-108 acts as the Proton acceptor in catalysis. Positions Tyr-229 to Met-255 form a cross-link, tryptophyl-tyrosyl-methioninium (Tyr-Met) (with W-107). His-270 contributes to the heme b binding site.

It belongs to the peroxidase family. Peroxidase/catalase subfamily. In terms of assembly, homodimer or homotetramer. It depends on heme b as a cofactor. Formation of the three residue Trp-Tyr-Met cross-link is important for the catalase, but not the peroxidase activity of the enzyme.

It catalyses the reaction H2O2 + AH2 = A + 2 H2O. The catalysed reaction is 2 H2O2 = O2 + 2 H2O. Its function is as follows. Bifunctional enzyme with both catalase and broad-spectrum peroxidase activity. This is Catalase-peroxidase 2 from Legionella pneumophila (strain Paris).